The following is a 191-amino-acid chain: A-type ATP synthase subunit E 1 (191 aa).

Belongs to the V-ATPase E subunit family. As to quaternary structure, has multiple subunits with at least A(3), B(3), C, D, E, F, H, I and proteolipid K(x).

It is found in the cell membrane. Component of the A-type ATP synthase that produces ATP from ADP in the presence of a proton gradient across the membrane. The polypeptide is A-type ATP synthase subunit E 1 (Methanospirillum hungatei JF-1 (strain ATCC 27890 / DSM 864 / NBRC 100397 / JF-1)).